The following is a 245-amino-acid chain: 3-deoxy-manno-octulosonate cytidylyltransferase (245 aa).

It belongs to the KdsB family.

It localises to the cytoplasm. It carries out the reaction 3-deoxy-alpha-D-manno-oct-2-ulosonate + CTP = CMP-3-deoxy-beta-D-manno-octulosonate + diphosphate. It functions in the pathway nucleotide-sugar biosynthesis; CMP-3-deoxy-D-manno-octulosonate biosynthesis; CMP-3-deoxy-D-manno-octulosonate from 3-deoxy-D-manno-octulosonate and CTP: step 1/1. Its pathway is bacterial outer membrane biogenesis; lipopolysaccharide biosynthesis. Activates KDO (a required 8-carbon sugar) for incorporation into bacterial lipopolysaccharide in Gram-negative bacteria. The sequence is that of 3-deoxy-manno-octulosonate cytidylyltransferase from Rhodopseudomonas palustris (strain HaA2).